The following is a 249-amino-acid chain: Aquaporin TIP2-1 (249 aa).

A run of 2 helical transmembrane segments spans residues 20–40 (AYVAEFIATLLFVFAGVGSAI) and 54–74 (AGLVAIAIAHALALFVGVSVA). The NPA 1 motif lies at 83-85 (NPA). 3 consecutive transmembrane segments (helical) span residues 102 to 122 (VFYWVAQLLGATVACLLLGFV), 141 to 161 (GVVFEVVITFALVYTVYATAA), and 168 to 188 (LGTIAPIAIGFIVGANILAAG). The NPA 2 motif lies at 196 to 198 (NPA). A helical transmembrane segment spans residues 217 to 237 (WVGPLVGGGLAGLVYGDVFIG).

The protein belongs to the MIP/aquaporin (TC 1.A.8) family. TIP (TC 1.A.8.10) subfamily.

It localises to the vacuole membrane. Aquaporins facilitate the transport of water and small neutral solutes across cell membranes. The sequence is that of Aquaporin TIP2-1 (TIP2-1) from Zea mays (Maize).